The following is a 255-amino-acid chain: MKAYAKANIFLKLTGFDSRKYHLLESRFILLKDVFDELELVDKESDSKKEFEIISNFKCENNIIQKAYLLLSKRYNNELKELFSKKSLKLTKNIPVCAGLGGGSSDCASFLLLMNETLNLKLNLQELINLSIQLGSDIAFFLSGFHSANVSGCGEIIEEFEDDIPNLKWTFPQISCQTKAVYDEFDRGIFDFQKNNNQAQIYKKLSTKELLQNFKNKELNDLFTPCATLYPKMKSYLQEDFFLSGSGSSVFKVDR.

Residue Lys6 is part of the active site. 95 to 105 (PVCAGLGGGSS) provides a ligand contact to ATP. The active site involves Asp137.

The protein belongs to the GHMP kinase family. IspE subfamily.

It catalyses the reaction 4-CDP-2-C-methyl-D-erythritol + ATP = 4-CDP-2-C-methyl-D-erythritol 2-phosphate + ADP + H(+). It functions in the pathway isoprenoid biosynthesis; isopentenyl diphosphate biosynthesis via DXP pathway; isopentenyl diphosphate from 1-deoxy-D-xylulose 5-phosphate: step 3/6. In terms of biological role, catalyzes the phosphorylation of the position 2 hydroxy group of 4-diphosphocytidyl-2C-methyl-D-erythritol. The protein is 4-diphosphocytidyl-2-C-methyl-D-erythritol kinase of Campylobacter jejuni subsp. jejuni serotype O:23/36 (strain 81-176).